The sequence spans 147 residues: Heavy metal-associated isoprenylated plant protein 27 (147 aa).

The region spanning 18 to 82 (FQKVEIKVKM…VMHRTGKKAE (65 aa)) is the HMA domain. The a metal cation site is built by Cys29 and Cys32. A Cysteine methyl ester modification is found at Cys144. Residue Cys144 is the site of S-farnesyl cysteine attachment. The propeptide at 145 to 147 (TIM) is removed in mature form.

The protein belongs to the HIPP family. Interacts with UBP16. Interacts with ZHD11/HB29.

It is found in the membrane. Heavy-metal-binding protein. Binds cadmium. May be involved in cadmium transport and play a role in cadmium detoxification. The polypeptide is Heavy metal-associated isoprenylated plant protein 27 (Arabidopsis thaliana (Mouse-ear cress)).